Consider the following 317-residue polypeptide: Cell division protein FtsQ (317 aa).

The Cytoplasmic segment spans residues 1–63; that stretch reads MDGGGRFVFA…RIHIPAHTGT (63 aa). Residues 64-82 form a helical membrane-spanning segment; it reads ISAVAFYAMIGLYGMSLGG. The Periplasmic segment spans residues 83 to 317; that stretch reads HTNIVTQTTT…KALKKAEKNT (235 aa). Residues 97-165 form the POTRA domain; it reads FAVEDVKVSG…KTVEVRLKER (69 aa).

Belongs to the FtsQ/DivIB family. FtsQ subfamily.

Its subcellular location is the cell inner membrane. Essential cell division protein. The protein is Cell division protein FtsQ of Agrobacterium fabrum (strain C58 / ATCC 33970) (Agrobacterium tumefaciens (strain C58)).